The chain runs to 172 residues: NADH-ubiquinone oxidoreductase chain 6 (172 aa).

5 consecutive transmembrane segments (helical) span residues 1–21 (MAFY…AIAS), 24–44 (APYF…GILV), 53–73 (LILF…SAAL), 86–106 (VVFW…GFLL), and 140–160 (GKML…VLEV).

It belongs to the complex I subunit 6 family. In terms of assembly, core subunit of respiratory chain NADH dehydrogenase (Complex I) which is composed of 45 different subunits.

The protein resides in the mitochondrion inner membrane. It carries out the reaction a ubiquinone + NADH + 5 H(+)(in) = a ubiquinol + NAD(+) + 4 H(+)(out). Core subunit of the mitochondrial membrane respiratory chain NADH dehydrogenase (Complex I) which catalyzes electron transfer from NADH through the respiratory chain, using ubiquinone as an electron acceptor. Essential for the catalytic activity and assembly of complex I. The chain is NADH-ubiquinone oxidoreductase chain 6 (mt-nd6) from Danio rerio (Zebrafish).